The primary structure comprises 82 residues: Small ribosomal subunit protein bS18 (82 aa).

Belongs to the bacterial ribosomal protein bS18 family. Part of the 30S ribosomal subunit. Forms a tight heterodimer with protein bS6.

In terms of biological role, binds as a heterodimer with protein bS6 to the central domain of the 16S rRNA, where it helps stabilize the platform of the 30S subunit. The protein is Small ribosomal subunit protein bS18 of Rhizobium meliloti (strain 1021) (Ensifer meliloti).